The following is a 265-amino-acid chain: Orotidine 5'-phosphate decarboxylase (265 aa).

Substrate is bound by residues D38, K60–H62, D91–T100, Y213, and R232. The Proton donor role is filled by K93.

It belongs to the OMP decarboxylase family.

It carries out the reaction orotidine 5'-phosphate + H(+) = UMP + CO2. It participates in pyrimidine metabolism; UMP biosynthesis via de novo pathway; UMP from orotate: step 2/2. The sequence is that of Orotidine 5'-phosphate decarboxylase (pyrG) from Rhizopus oryzae (Mucormycosis agent).